Here is a 315-residue protein sequence, read N- to C-terminus: Cobalamin biosynthesis protein CobD (315 aa).

5 helical membrane-spanning segments follow: residues 48-70 (IAGILTSCLVYLISFIIPFLSVQ), 75-94 (LHWILGELLSIMIIYTTIAI), 148-170 (LVDGITTPLFYAVFGGPAWAMLY), 208-230 (ITSYILVLSSLFLGYNFKNSLYI), and 292-314 (LILLSSILTFIFYILIYSGAAYF).

Belongs to the CobD/CbiB family.

The protein localises to the cell membrane. It functions in the pathway cofactor biosynthesis; adenosylcobalamin biosynthesis. In terms of biological role, converts cobyric acid to cobinamide by the addition of aminopropanol on the F carboxylic group. This chain is Cobalamin biosynthesis protein CobD, found in Leptospira interrogans serogroup Icterohaemorrhagiae serovar copenhageni (strain Fiocruz L1-130).